We begin with the raw amino-acid sequence, 341 residues long: Zinc transporter ZIP11 (341 aa).

Transmembrane regions (helical) follow at residues 12 to 32 (LLGTFFTWGLTAAGAALVFVF), 44 to 64 (LGFAAGVMLAASYWSLLAPAV), 72 to 92 (GFGSLAFLPVAIGFTLGAAFV), 193 to 213 (IALLILAITIHNIPEGLAVGV), 262 to 284 (FWYGQLSGMVEPLAGVFGAFAVV), 289 to 306 (ILPYALAFAAGAMVYVIM), and 321 to 341 (LASWASILGFVVMMSLDVGLG).

The protein belongs to the ZIP transporter (TC 2.A.5) family.

The protein resides in the cell membrane. Its subcellular location is the nucleus. It localises to the cytoplasm. The protein localises to the golgi apparatus. The catalysed reaction is Zn(2+)(in) = Zn(2+)(out). The enzyme catalyses Cu(2+)(in) = Cu(2+)(out). Functionally, zinc importer that regulates cytosolic zinc concentrations either via zinc influx from the extracellular compartment or efflux from intracellular organelles such as Golgi apparatus. May transport copper ions as well. The transport mechanism remains to be elucidated. This Bos taurus (Bovine) protein is Zinc transporter ZIP11 (SLC39A11).